Consider the following 2179-residue polypeptide: FRAS1-related extracellular matrix protein 1 (2179 aa).

Residues 1-21 (MNSLSWGAANAVLLLLLLAWA) form the signal peptide. Residues 199-201 (RGD) carry the Cell attachment site motif. 3 CSPG repeats span residues 296–390 (KAAF…LEVY), 413–500 (APRV…FRIF), and 521–615 (PPFL…FVLW). N-linked (GlcNAc...) asparagine glycosylation occurs at Asn-335. Asn-560 and Asn-622 each carry an N-linked (GlcNAc...) asparagine glycan. CSPG repeat units follow at residues 642–754 (KEAP…FSVS), 776–867 (QVPE…LEVT), and 887–982 (EPPV…LVVS). The N-linked (GlcNAc...) asparagine glycan is linked to Asn-1014. 6 CSPG repeats span residues 1024–1126 (PPSI…VYVT), 1147–1254 (EAPD…IQLS), 1275–1372 (KPML…FYLW), 1393–1485 (GDIV…FIIS), 1506–1596 (LPVV…FMAT), and 1628–1724 (PRIT…FQIM). Asn-1566 carries N-linked (GlcNAc...) asparagine glycosylation. The Calx-beta domain occupies 1731–1830 (ATPQILELKW…DDEVFEVILN (100 aa)). Residues 1907–1909 (RGD) carry the Cell attachment site motif. Residues 2060–2174 (HSGYCHILIT…CRRAKPHNYV (115 aa)) enclose the C-type lectin domain. An intrachain disulfide couples Cys-2151 to Cys-2165.

This sequence belongs to the FRAS1 family. Interacts with FREM2.

The protein resides in the secreted. The protein localises to the extracellular space. It is found in the extracellular matrix. Its subcellular location is the basement membrane. In terms of biological role, extracellular matrix protein that plays a role in epidermal differentiation and is required for epidermal adhesion during embryonic development. In Homo sapiens (Human), this protein is FRAS1-related extracellular matrix protein 1.